The primary structure comprises 247 residues: Ribonuclease 3 (247 aa).

The 129-residue stretch at 21–149 (LQKLSKKIGI…LVGAIYLDQG (129 aa)) folds into the RNase III domain. Mg(2+) is bound at residue Glu62. The active site involves Asp66. The Mg(2+) site is built by Asn135 and Glu138. Residue Glu138 is part of the active site. The 70-residue stretch at 176–245 (DYKTQLQEYS…AKELYNRIRK (70 aa)) folds into the DRBM domain.

The protein belongs to the ribonuclease III family. As to quaternary structure, homodimer. Mg(2+) is required as a cofactor.

It localises to the cytoplasm. The catalysed reaction is Endonucleolytic cleavage to 5'-phosphomonoester.. Digests double-stranded RNA. Involved in the processing of primary rRNA transcript to yield the immediate precursors to the large and small rRNAs (23S and 16S). Processes some mRNAs, and tRNAs when they are encoded in the rRNA operon. Processes pre-crRNA and tracrRNA of type II CRISPR loci if present in the organism. This Leptospira interrogans serogroup Icterohaemorrhagiae serovar copenhageni (strain Fiocruz L1-130) protein is Ribonuclease 3.